An 85-amino-acid polypeptide reads, in one-letter code: Beta-insect depressant toxin BjIT2 (85 aa).

Residues 1–21 (MKLLLLLVISASMLLECLVNA) form the signal peptide. Residues 22-82 (DGYIRKKDGC…TWKSSTNTCG (61 aa)) form the LCN-type CS-alpha/beta domain. 4 disulfides stabilise this stretch: cysteine 31–cysteine 81, cysteine 35–cysteine 56, cysteine 42–cysteine 63, and cysteine 46–cysteine 65. Residues 83–85 (RKK) constitute a propeptide, removed by a carboxypeptidase.

Belongs to the long (4 C-C) scorpion toxin superfamily. Sodium channel inhibitor family. Beta subfamily. C-terminal basic residues are removed by a carboxypeptidase. Expressed by the venom gland.

It localises to the secreted. Functionally, depressant insect beta-toxins cause a transient contraction paralysis followed by a slow flaccid paralysis. They bind voltage-independently at site-4 of sodium channels (Nav) and shift the voltage of activation toward more negative potentials thereby affecting sodium channel activation and promoting spontaneous and repetitive firing. This toxin is active only on insects. The sequence is that of Beta-insect depressant toxin BjIT2 from Hottentotta judaicus (Black scorpion).